Here is a 693-residue protein sequence, read N- to C-terminus: Elongation factor G (693 aa).

The region spanning 9–283 is the tr-type G domain; it reads ERVRNIGIIA…AVCDYLPSPL (275 aa). GTP contacts are provided by residues 18-25, 82-86, and 136-139; these read AHIDAGKT, DTPGH, and NKMD.

Belongs to the TRAFAC class translation factor GTPase superfamily. Classic translation factor GTPase family. EF-G/EF-2 subfamily.

It localises to the cytoplasm. Catalyzes the GTP-dependent ribosomal translocation step during translation elongation. During this step, the ribosome changes from the pre-translocational (PRE) to the post-translocational (POST) state as the newly formed A-site-bound peptidyl-tRNA and P-site-bound deacylated tRNA move to the P and E sites, respectively. Catalyzes the coordinated movement of the two tRNA molecules, the mRNA and conformational changes in the ribosome. This is Elongation factor G from Dehalococcoides mccartyi (strain ATCC BAA-2100 / JCM 16839 / KCTC 5957 / BAV1).